A 166-amino-acid chain; its full sequence is Photosystem I assembly protein Ycf3 (166 aa).

TPR repeat units lie at residues 35–68, 72–105, and 120–153; these read AFTY…EIDP, SYIL…NPSL, and GEQA…APTN.

Belongs to the Ycf3 family.

The protein localises to the plastid. The protein resides in the chloroplast thylakoid membrane. Essential for the assembly of the photosystem I (PSI) complex. May act as a chaperone-like factor to guide the assembly of the PSI subunits. In Oltmannsiellopsis viridis (Marine flagellate), this protein is Photosystem I assembly protein Ycf3.